The sequence spans 128 residues: Deoxycytidylate deaminase (128 aa).

Residues 5 to 128 (DWDEYFLGIA…IERVVYPKES (124 aa)) form the CMP/dCMP-type deaminase domain. Position 81 (histidine 81) interacts with Zn(2+). Glutamate 83 acts as the Proton donor in catalysis. Zn(2+)-binding residues include cysteine 107 and cysteine 110.

It belongs to the cytidine and deoxycytidylate deaminase family.

It catalyses the reaction dCMP + H2O + H(+) = dUMP + NH4(+). The sequence is that of Deoxycytidylate deaminase (36.1) from Mycobacterium (Mycobacteriophage D29).